We begin with the raw amino-acid sequence, 240 residues long: Small ribosomal subunit protein uS2 (240 aa).

Belongs to the universal ribosomal protein uS2 family.

The chain is Small ribosomal subunit protein uS2 from Haemophilus influenzae (strain 86-028NP).